We begin with the raw amino-acid sequence, 443 residues long: D(2) dopamine receptor (443 aa).

The Extracellular portion of the chain corresponds to 1-37 (MDPLNLSWYDDDLERQNWSRPFNGSDGKADRPHYNYY). 3 N-linked (GlcNAc...) asparagine glycosylation sites follow: N5, N17, and N23. A helical membrane pass occupies residues 38-60 (ATLLTLLIAVIVFGNVLVCMAVS). Residues 61–70 (REKALQTTTN) lie on the Cytoplasmic side of the membrane. Residues 71-93 (YLIVSLAVADLLVATLVMPWVVY) traverse the membrane as a helical segment. Over 94-108 (LEVVGEWKFSKIHCD) the chain is Extracellular. An intrachain disulfide couples C107 to C182. Residues 109–130 (IFVTLDVMMCTASILNLCAISI) traverse the membrane as a helical segment. Residues 131-151 (DRYTAVAMPMLYNTRYSSKRR) lie on the Cytoplasmic side of the membrane. A helical transmembrane segment spans residues 152 to 172 (VTVMIAIVWVLSFTISCPLLF). The Extracellular portion of the chain corresponds to 173-188 (GLNNADQNECIIANPA). The chain crosses the membrane as a helical span at residues 189–213 (FVVYSSIVSFYVPFIVTLLVYIKIY). Residues 211-373 (KIYIVLRRRR…SQQKEKKATQ (163 aa)) form an interaction with PPP1R9B region. At 214–373 (IVLRRRRKRV…SQQKEKKATQ (160 aa)) the chain is on the cytoplasmic side. Positions 281 to 332 (MEMLSSTSPPERTRYSPIPPSHHQLTLPDPSHHGLHSTPDSPAKPEKNGHAK) are disordered. Residues 374-395 (MLAIVLGVFIICWLPFFITHIL) form a helical membrane-spanning segment. The Extracellular segment spans residues 396-409 (NIHCDCNIPPVLYS). C399 and C401 are joined by a disulfide. The chain crosses the membrane as a helical span at residues 410 to 431 (AFTWLGYVNSAVNPIIYTTFNI). Over 432-443 (EFRKAFLKILHC) the chain is Cytoplasmic. C443 is lipidated: S-palmitoyl cysteine.

The protein belongs to the G-protein coupled receptor 1 family. In terms of assembly, forms homo- and heterooligomers with DRD4. The interaction with DRD4 may modulate agonist-induced downstream signaling. Interacts with CADPS and CADPS2. Interacts with GPRASP1, PPP1R9B and CLIC6. Interacts with ARRB2. Interacts with HTR2A. Interacts with DRD1. Interacts with KCNA2. In terms of processing, palmitoylated. Palmitoylation which is required for proper localization to the plasma membrane and stability of the receptor could be carried on by ZDHHC4, ZDHHC3 and ZDHHC8.

The protein localises to the cell membrane. It localises to the golgi apparatus membrane. In terms of biological role, dopamine receptor whose activity is mediated by G proteins which inhibit adenylyl cyclase. Positively regulates postnatal regression of retinal hyaloid vessels via suppression of VEGFR2/KDR activity, downstream of OPN5. This Chlorocebus aethiops (Green monkey) protein is D(2) dopamine receptor (DRD2).